Consider the following 146-residue polypeptide: Small ribosomal subunit protein uS5 (146 aa).

The S5 DRBM domain maps to 8-71 (FEESIVNIGR…DNAFKNLSKV (64 aa)).

This sequence belongs to the universal ribosomal protein uS5 family. In terms of assembly, part of the 30S ribosomal subunit. Contacts proteins S4 and S8.

In terms of biological role, with S4 and S12 plays an important role in translational accuracy. Located at the back of the 30S subunit body where it stabilizes the conformation of the head with respect to the body. The chain is Small ribosomal subunit protein uS5 from Sulfurimonas denitrificans (strain ATCC 33889 / DSM 1251) (Thiomicrospira denitrificans (strain ATCC 33889 / DSM 1251)).